Reading from the N-terminus, the 227-residue chain is uncharacterized protein (227 aa).

A signal peptide spans 1 to 22 (MDSVMRKSLFLLLPLVVTNAHA).

This is an uncharacterized protein from Salmonella typhi.